The chain runs to 230 residues: Geranylgeranylglyceryl phosphate synthase (230 aa).

Lys13 is a binding site for sn-glycerol 1-phosphate. Mg(2+) contacts are provided by Asp15 and Thr41. Sn-glycerol 1-phosphate is bound by residues Tyr161–Gly166, Gly191, and Gly211–Asn212.

Belongs to the GGGP/HepGP synthase family. Group I subfamily. Mg(2+) is required as a cofactor.

It localises to the cytoplasm. The enzyme catalyses sn-glycerol 1-phosphate + (2E,6E,10E)-geranylgeranyl diphosphate = sn-3-O-(geranylgeranyl)glycerol 1-phosphate + diphosphate. The protein operates within membrane lipid metabolism; glycerophospholipid metabolism. Prenyltransferase that catalyzes the transfer of the geranylgeranyl moiety of geranylgeranyl diphosphate (GGPP) to the C3 hydroxyl of sn-glycerol-1-phosphate (G1P). This reaction is the first ether-bond-formation step in the biosynthesis of archaeal membrane lipids. In Methanoculleus marisnigri (strain ATCC 35101 / DSM 1498 / JR1), this protein is Geranylgeranylglyceryl phosphate synthase.